The following is a 437-amino-acid chain: Elongation factor 1-gamma-B (437 aa).

Residues 2–87 form the GST N-terminal domain; that stretch reads AGGTLYTYPD…YVANDELRGS (86 aa). The region spanning 89–222 is the GST C-terminal domain; that stretch reads NRLHQAQVIQ…KMAQFDAKKF (134 aa). The segment covering 225-240 has biased composition (basic and acidic residues); the sequence is VQPKKETPKKEKPAKE. The tract at residues 225-279 is disordered; sequence VQPKKETPKKEKPAKEPKKKKKKKKKATPAPAPAPEDDLDESEKALAAEPKSKDP. Positions 241 to 251 are enriched in basic residues; sequence PKKKKKKKKKA. The segment covering 266 to 279 has biased composition (basic and acidic residues); it reads SEKALAAEPKSKDP. In terms of domain architecture, EF-1-gamma C-terminal spans 276-437; it reads SKDPYAHLPK…KAFNQGKIFK (162 aa).

EF-1 is composed of four subunits: alpha, beta, delta, and gamma.

Functionally, probably plays a role in anchoring the complex to other cellular components. The chain is Elongation factor 1-gamma-B (eef1g-b) from Xenopus laevis (African clawed frog).